The sequence spans 351 residues: S-adenosylmethionine:tRNA ribosyltransferase-isomerase (351 aa).

It belongs to the QueA family. As to quaternary structure, monomer.

The protein resides in the cytoplasm. The enzyme catalyses 7-aminomethyl-7-carbaguanosine(34) in tRNA + S-adenosyl-L-methionine = epoxyqueuosine(34) in tRNA + adenine + L-methionine + 2 H(+). It participates in tRNA modification; tRNA-queuosine biosynthesis. Its function is as follows. Transfers and isomerizes the ribose moiety from AdoMet to the 7-aminomethyl group of 7-deazaguanine (preQ1-tRNA) to give epoxyqueuosine (oQ-tRNA). This Acinetobacter baumannii (strain SDF) protein is S-adenosylmethionine:tRNA ribosyltransferase-isomerase.